A 701-amino-acid polypeptide reads, in one-letter code: Transcription factor PDR8 (701 aa).

The tract at residues 1–22 (MDGSHFPMKSTTGEPVSSGKKG) is disordered. Positions 31-59 (CAFCRKRKLKCSQARPMCQQCVIRKLPQC) form a DNA-binding region, zn(2)-C6 fungal-type.

The protein resides in the cytoplasm. Its subcellular location is the nucleus. In terms of biological role, up-regulates the transcription of the genes for ATP-binding cassette (ABC) transporters YOR1 and PDR15, for major facilitator superfamily transporter AZR1, for pleiotropic drug resistance SNG1, for alpha-glucosidase YJL216C and for YLL056C. In Saccharomyces cerevisiae (strain ATCC 204508 / S288c) (Baker's yeast), this protein is Transcription factor PDR8 (PDR8).